A 232-amino-acid polypeptide reads, in one-letter code: Rhamnogalacturonan acetylesterase RhgT (232 aa).

Catalysis depends on Ser-14, which acts as the Nucleophile. Active-site residues include Glu-191 and His-195.

The protein belongs to the 'GDSL' lipolytic enzyme family. Monomer.

With respect to regulation, almost completely inhibited by diethylpyrocarbonate at 5 mM and completely inhibited by phenylmethylsulfonyl fluoride (PMSF) at 50 mM. Dimethyl phosphite achieves only a 53% inhibition. Also inhibited by metal ions (magnesium, manganese and calcium) and chelating agent (EDTA) at the same level. May play a role in the degradation of type I rhamnogalacturonan derived from plant cell walls. This enzyme has a broad substrate specificity, and shows strong preference for glucose pentaacetate, beta-naphthylacetate, and p-nitrophenyl acetate (pNPA). Also active toward acetylated xylan. The protein is Rhamnogalacturonan acetylesterase RhgT (rhgT) of Bacillus subtilis (strain 168).